The following is a 226-amino-acid chain: Phosphoribosylformylglycinamidine synthase subunit PurQ (226 aa).

The 225-residue stretch at 2–226 folds into the Glutamine amidotransferase type-1 domain; the sequence is KFAVIQFPGS…LKNFLVTVKN (225 aa). C86 functions as the Nucleophile in the catalytic mechanism. Residues H195 and E197 contribute to the active site.

Part of the FGAM synthase complex composed of 1 PurL, 1 PurQ and 2 PurS subunits.

The protein resides in the cytoplasm. It carries out the reaction N(2)-formyl-N(1)-(5-phospho-beta-D-ribosyl)glycinamide + L-glutamine + ATP + H2O = 2-formamido-N(1)-(5-O-phospho-beta-D-ribosyl)acetamidine + L-glutamate + ADP + phosphate + H(+). The enzyme catalyses L-glutamine + H2O = L-glutamate + NH4(+). The protein operates within purine metabolism; IMP biosynthesis via de novo pathway; 5-amino-1-(5-phospho-D-ribosyl)imidazole from N(2)-formyl-N(1)-(5-phospho-D-ribosyl)glycinamide: step 1/2. Functionally, part of the phosphoribosylformylglycinamidine synthase complex involved in the purines biosynthetic pathway. Catalyzes the ATP-dependent conversion of formylglycinamide ribonucleotide (FGAR) and glutamine to yield formylglycinamidine ribonucleotide (FGAM) and glutamate. The FGAM synthase complex is composed of three subunits. PurQ produces an ammonia molecule by converting glutamine to glutamate. PurL transfers the ammonia molecule to FGAR to form FGAM in an ATP-dependent manner. PurS interacts with PurQ and PurL and is thought to assist in the transfer of the ammonia molecule from PurQ to PurL. This is Phosphoribosylformylglycinamidine synthase subunit PurQ from Lactococcus lactis subsp. cremoris (Streptococcus cremoris).